The following is a 1080-amino-acid chain: DNA-directed RNA polymerase subunit beta (1080 aa).

This sequence belongs to the RNA polymerase beta chain family. In plastids the minimal PEP RNA polymerase catalytic core is composed of four subunits: alpha, beta, beta', and beta''. When a (nuclear-encoded) sigma factor is associated with the core the holoenzyme is formed, which can initiate transcription.

The protein resides in the plastid. It localises to the chloroplast. It carries out the reaction RNA(n) + a ribonucleoside 5'-triphosphate = RNA(n+1) + diphosphate. Functionally, DNA-dependent RNA polymerase catalyzes the transcription of DNA into RNA using the four ribonucleoside triphosphates as substrates. In Mesostigma viride (Green alga), this protein is DNA-directed RNA polymerase subunit beta.